A 279-amino-acid polypeptide reads, in one-letter code: Putative carbamate hydrolase RutD (279 aa).

The region spanning 23–126 (PVVVLISGLG…LVSVNGWLRI (104 aa)) is the AB hydrolase-1 domain.

It belongs to the AB hydrolase superfamily. Hydrolase RutD family.

The catalysed reaction is carbamate + 2 H(+) = NH4(+) + CO2. Functionally, involved in pyrimidine catabolism. May facilitate the hydrolysis of carbamate, a reaction that can also occur spontaneously. The chain is Putative carbamate hydrolase RutD from Escherichia coli O17:K52:H18 (strain UMN026 / ExPEC).